We begin with the raw amino-acid sequence, 65 residues long: Large ribosomal subunit protein bL35 (65 aa).

The protein belongs to the bacterial ribosomal protein bL35 family.

The protein is Large ribosomal subunit protein bL35 of Synechococcus sp. (strain CC9311).